A 508-amino-acid polypeptide reads, in one-letter code: MGLPWYRVHTVVLNDPGRLIAVHIMHTALVSGWAGSMALYELAVFDPSDPVLDPMWRQGMFVIPFITRLGVTKSWGGWSITGETVTNAGLWSYEGVAAVHIILSGLLFLAAIWHWVFWDLELFRDERTGKPSLDLPKIFGIHLFLSGLLCFGFGAFHVTGLFGPGIWVSDPYGLTGSVQPVSPAWGAEGFDPFNAGGIASHHIAAGILGILAGLFHLSVRPPQRLYKGLRMGNVETVLSSSIAAVFWAAFVVAGTMWYGSAATPIELFGPTRYQWDQGYFEQEIDKRVGTSLSEGLTLSEAWSKIPEKLAFYDYIGNNPAKGGLFRAGAMDNGDGIAVGWLGHASFKDKEGRELFVRRMPSFFETFPVVLLDSEGIVRADVPFRRAESKYSIEQVGVTVQFYGGELDGVSFSDPATVKKYARRAQLGEIFEFDRATLKSDGVFRSSPRGWFTFGHANFALLFFFGHIWHGGRTLFRDVFAGIDPDLDAQVEFGLFQKLGDPSTRREAV.

6 consecutive transmembrane segments (helical) span residues 21–36 (AVHI…WAGS), 101–115 (IILS…IWHW), 140–156 (GIHL…FGAF), 203–218 (IAAG…FHLS), 237–252 (VLSS…AFVV), and 457–472 (NFAL…HGGR).

It belongs to the PsbB/PsbC family. PsbB subfamily. PSII is composed of 1 copy each of membrane proteins PsbA, PsbB, PsbC, PsbD, PsbE, PsbF, PsbH, PsbI, PsbJ, PsbK, PsbL, PsbM, PsbT, PsbX, PsbY, PsbZ, Psb30/Ycf12, at least 3 peripheral proteins of the oxygen-evolving complex and a large number of cofactors. It forms dimeric complexes. Requires Binds multiple chlorophylls. PSII binds additional chlorophylls, carotenoids and specific lipids. as cofactor.

The protein localises to the plastid. It is found in the chloroplast thylakoid membrane. In terms of biological role, one of the components of the core complex of photosystem II (PSII). It binds chlorophyll and helps catalyze the primary light-induced photochemical processes of PSII. PSII is a light-driven water:plastoquinone oxidoreductase, using light energy to abstract electrons from H(2)O, generating O(2) and a proton gradient subsequently used for ATP formation. In Chaetosphaeridium globosum (Charophycean green alga), this protein is Photosystem II CP47 reaction center protein.